Reading from the N-terminus, the 505-residue chain is Histidine--tRNA ligase, mitochondrial (505 aa).

The N-terminal 31 residues, 1–31, are a transit peptide targeting the mitochondrion; that stretch reads MPHLGPLRRRAWAALLGQLLRPPSTVCTRGC. Phosphoserine is present on Ser-66. L-histidine-binding positions include 130 to 132, Arg-157, Gln-173, Asp-177, Arg-326, and 330 to 331; these read DLT and YY. Lys-443 carries the N6-acetyllysine modification.

This sequence belongs to the class-II aminoacyl-tRNA synthetase family. As to quaternary structure, homodimer.

It localises to the mitochondrion. It carries out the reaction tRNA(His) + L-histidine + ATP = L-histidyl-tRNA(His) + AMP + diphosphate + H(+). Its function is as follows. Mitochondrial aminoacyl-tRNA synthetase that catalyzes the ATP-dependent ligation of histidine to the 3'-end of its cognate tRNA, via the formation of an aminoacyl-adenylate intermediate (His-AMP). The chain is Histidine--tRNA ligase, mitochondrial (Hars2) from Mus musculus (Mouse).